We begin with the raw amino-acid sequence, 107 residues long: MFGLFIITAIAEILGCYFPYLILKEGKSAWLWLPTALSLAVFVWLLTLHPAASGRIYAAYGGIYIFTALMWLRFVDQVALTRWDILGGVIVLCGAGLIILQPQGLIR.

4 consecutive transmembrane segments (helical) span residues 2–22 (FGLF…PYLI), 28–48 (SAWL…LLTL), 56–76 (IYAA…RFVD), and 85–105 (ILGG…PQGL).

It belongs to the UPF0060 family.

The protein resides in the cell inner membrane. This Acinetobacter baumannii (strain ATCC 17978 / DSM 105126 / CIP 53.77 / LMG 1025 / NCDC KC755 / 5377) protein is UPF0060 membrane protein A1S_1909.